The following is a 1031-amino-acid chain: Beta-galactosidase (1031 aa).

Substrate-binding residues include Asn-100 and Asp-198. Residue Asp-198 participates in Na(+) binding. Glu-412, His-414, and Glu-457 together coordinate Mg(2+). Residues Glu-457 and 533–536 (EYAH) each bind substrate. The active-site Proton donor is Glu-457. The active-site Nucleophile is Glu-533. Asn-593 is a binding site for Mg(2+). Na(+)-binding residues include Phe-597 and Asn-600. Asn-600 and Trp-1005 together coordinate substrate.

The protein belongs to the glycosyl hydrolase 2 family. As to quaternary structure, homotetramer. Requires Mg(2+) as cofactor. Na(+) serves as cofactor.

The enzyme catalyses Hydrolysis of terminal non-reducing beta-D-galactose residues in beta-D-galactosides.. The polypeptide is Beta-galactosidase (Vibrio vulnificus (strain YJ016)).